The following is a 156-amino-acid chain: Small ribosomal subunit protein uS7 (156 aa).

It belongs to the universal ribosomal protein uS7 family. Part of the 30S ribosomal subunit. Contacts proteins S9 and S11.

Its function is as follows. One of the primary rRNA binding proteins, it binds directly to 16S rRNA where it nucleates assembly of the head domain of the 30S subunit. Is located at the subunit interface close to the decoding center, probably blocks exit of the E-site tRNA. The chain is Small ribosomal subunit protein uS7 from Bacillus cytotoxicus (strain DSM 22905 / CIP 110041 / 391-98 / NVH 391-98).